The following is a 348-amino-acid chain: GTP 3',8-cyclase (348 aa).

The region spanning 24–248 is the Radical SAM core domain; sequence PFGRAVTYLR…TDIDYQTGGP (225 aa). Arg33 is a GTP binding site. [4Fe-4S] cluster-binding residues include Cys40 and Cys44. Tyr46 contributes to the S-adenosyl-L-methionine binding site. Cys47 contacts [4Fe-4S] cluster. Residue Arg82 participates in GTP binding. Position 86 (Gly86) interacts with S-adenosyl-L-methionine. Position 115 (Thr115) interacts with GTP. Ser139 is a binding site for S-adenosyl-L-methionine. Lys175 provides a ligand contact to GTP. Met209 provides a ligand contact to S-adenosyl-L-methionine. [4Fe-4S] cluster is bound by residues Cys272 and Cys275. 277–279 is a GTP binding site; that stretch reads RVR. Cys289 provides a ligand contact to [4Fe-4S] cluster.

Belongs to the radical SAM superfamily. MoaA family. Monomer and homodimer. It depends on [4Fe-4S] cluster as a cofactor.

It carries out the reaction GTP + AH2 + S-adenosyl-L-methionine = (8S)-3',8-cyclo-7,8-dihydroguanosine 5'-triphosphate + 5'-deoxyadenosine + L-methionine + A + H(+). Its pathway is cofactor biosynthesis; molybdopterin biosynthesis. In terms of biological role, catalyzes the cyclization of GTP to (8S)-3',8-cyclo-7,8-dihydroguanosine 5'-triphosphate. The polypeptide is GTP 3',8-cyclase (Rhizobium etli (strain ATCC 51251 / DSM 11541 / JCM 21823 / NBRC 15573 / CFN 42)).